Here is a 237-residue protein sequence, read N- to C-terminus: Uracil-DNA glycosylase (237 aa).

Asp77 acts as the Proton acceptor in catalysis.

The protein belongs to the uracil-DNA glycosylase (UDG) superfamily. UNG family.

It is found in the cytoplasm. It carries out the reaction Hydrolyzes single-stranded DNA or mismatched double-stranded DNA and polynucleotides, releasing free uracil.. Excises uracil residues from the DNA which can arise as a result of misincorporation of dUMP residues by DNA polymerase or due to deamination of cytosine. This is Uracil-DNA glycosylase from Acinetobacter baylyi (strain ATCC 33305 / BD413 / ADP1).